Consider the following 90-residue polypeptide: MYKYCFRKPACISYRGIRFMSKASDTDPTLANASSAKRSAFESREKAKEDFFVHQHEIEQLRKLKESLKLHREELDELESRVDKKMKSNE.

Residues Glu-42 to Asn-89 adopt a coiled-coil conformation.

It belongs to the ATPase inhibitor family.

The protein localises to the mitochondrion. Forms a one-to-one complex with ATPase to inhibit the enzyme activity completely. The polypeptide is Putative ATPase inhibitor, mitochondrial (inh1) (Schizosaccharomyces pombe (strain 972 / ATCC 24843) (Fission yeast)).